The following is a 770-amino-acid chain: Formate acetyltransferase (770 aa).

The PFL domain occupies 5 to 635; that stretch reads NEMQKLAWAG…KTGNTPDGRR (631 aa). The active-site S-acetylcysteine intermediate is the cysteine 419. Cysteine 420 (cysteine radical intermediate) is an active-site residue. In terms of domain architecture, Glycine radical spans 642–770; the sequence is PGANPMHGRD…VITRTFTESM (129 aa). Position 745 is a glycine radical (glycine 745).

This sequence belongs to the glycyl radical enzyme (GRE) family. PFL subfamily. As to quaternary structure, homodimer.

It is found in the cytoplasm. The catalysed reaction is formate + acetyl-CoA = pyruvate + CoA. Its pathway is fermentation; pyruvate fermentation; formate from pyruvate: step 1/1. In terms of biological role, catalyzes the conversion of pyruvate to formate and acetyl-CoA. In Haemophilus influenzae (strain ATCC 51907 / DSM 11121 / KW20 / Rd), this protein is Formate acetyltransferase (pflB).